Consider the following 302-residue polypeptide: Methionyl-tRNA formyltransferase (302 aa).

S107–P110 lines the (6S)-5,6,7,8-tetrahydrofolate pocket.

The protein belongs to the Fmt family.

It catalyses the reaction L-methionyl-tRNA(fMet) + (6R)-10-formyltetrahydrofolate = N-formyl-L-methionyl-tRNA(fMet) + (6S)-5,6,7,8-tetrahydrofolate + H(+). Functionally, attaches a formyl group to the free amino group of methionyl-tRNA(fMet). The formyl group appears to play a dual role in the initiator identity of N-formylmethionyl-tRNA by promoting its recognition by IF2 and preventing the misappropriation of this tRNA by the elongation apparatus. This chain is Methionyl-tRNA formyltransferase, found in Leifsonia xyli subsp. xyli (strain CTCB07).